Consider the following 261-residue polypeptide: 6-carboxyhexanoate--CoA ligase (261 aa).

Belongs to the BioW family. As to quaternary structure, homodimer. The cofactor is Mg(2+).

The enzyme catalyses heptanedioate + ATP + CoA = 6-carboxyhexanoyl-CoA + AMP + diphosphate. The protein operates within metabolic intermediate metabolism; pimeloyl-CoA biosynthesis; pimeloyl-CoA from pimelate: step 1/1. Catalyzes the transformation of pimelate into pimeloyl-CoA with concomitant hydrolysis of ATP to AMP. This chain is 6-carboxyhexanoate--CoA ligase, found in Bacillus licheniformis (strain ATCC 14580 / DSM 13 / JCM 2505 / CCUG 7422 / NBRC 12200 / NCIMB 9375 / NCTC 10341 / NRRL NRS-1264 / Gibson 46).